The primary structure comprises 196 residues: MLIGWRAVPRRHGGELPRRGALALGCIALLLMGIVGCTTVTDGTAMPDTNVAPAYRSSVSASVSASAATSSIRESQRQQSLTTKAIRTSCDALAATSKDAIDKVNAYVAAFNQGRNTGPTEGPAIDALNNSASTVSGSLSAALSAQLGDALNAYVDAARAVANAIGAHASTAEFNRRVDRLNDTKTKALTMCVAAF.

A helical membrane pass occupies residues 20 to 40; that stretch reads GALALGCIALLLMGIVGCTTV.

The protein localises to the membrane. This is an uncharacterized protein from Mycobacterium tuberculosis (strain CDC 1551 / Oshkosh).